We begin with the raw amino-acid sequence, 261 residues long: Transmembrane protein 187 (261 aa).

The next 6 membrane-spanning stretches (helical) occupy residues 8–28, 43–63, 88–108, 113–133, 140–162, and 190–210; these read AFVHVAVAGGLCAVAVFTGIF, APVAGLPAFLAMPFNSLVNMA, VFAAMALLYGPVQWLRLWTQW, VLDQWLTLPIFAWPVAWCLYL, WLFLSLECVSLASYGLALLHPQG, and SATYLALGVLSCLGFVVLKLC.

Ubiquitous.

It localises to the membrane. This chain is Transmembrane protein 187 (TMEM187), found in Homo sapiens (Human).